A 179-amino-acid polypeptide reads, in one-letter code: Large ribosomal subunit protein uL6 (179 aa).

It belongs to the universal ribosomal protein uL6 family. In terms of assembly, part of the 50S ribosomal subunit.

This protein binds to the 23S rRNA, and is important in its secondary structure. It is located near the subunit interface in the base of the L7/L12 stalk, and near the tRNA binding site of the peptidyltransferase center. The protein is Large ribosomal subunit protein uL6 of Chlorobium phaeovibrioides (strain DSM 265 / 1930) (Prosthecochloris vibrioformis (strain DSM 265)).